The following is a 288-amino-acid chain: Aquaporin NIP2-1 (288 aa).

N-acetylmethionine is present on methionine 1. 2 helical membrane-spanning segments follow: residues leucine 50 to valine 70 and valine 77 to cysteine 97. An NPA 1 motif is present at residues asparagine 106–alanine 108. The next 3 helical transmembrane spans lie at alanine 126 to phenylalanine 146, leucine 170 to valine 190, and glycine 202 to alanine 222. The NPA 2 motif lies at asparagine 225–alanine 227. The helical transmembrane segment at leucine 234–valine 254 threads the bilayer. A Phosphoserine modification is found at serine 278.

The protein belongs to the MIP/aquaporin (TC 1.A.8) family. NIP (TC 1.A.8.12) subfamily. In terms of tissue distribution, specifically expressed in roots with high expression in root elongation zone and root stele.

Its subcellular location is the endoplasmic reticulum membrane. Its function is as follows. Low water transport activity in yeast cells. In Arabidopsis thaliana (Mouse-ear cress), this protein is Aquaporin NIP2-1 (NIP2-1).